Here is an 885-residue protein sequence, read N- to C-terminus: Alpha-actinin (885 aa).

The tract at residues 1–242 (MTQDGYMQQE…IMTYVSWYYH (242 aa)) is actin-binding. Calponin-homology (CH) domains lie at 26-130 (KQQR…LRFA) and 139-245 (MTAK…HAFH). Spectrin repeat units lie at residues 270-377 (LMEE…EEWL), 389-494 (HLAQ…ALDE), 508-614 (EFAK…HTLQ), and 626-727 (LRRQ…NEVE). EF-hand domains follow at residues 741–776 (EQLN…LGYN) and 780–815 (DDRP…EYTD). Positions 754, 758, 760, 765, 793, 795, 797, and 799 each coordinate Ca(2+).

The protein belongs to the alpha-actinin family. In terms of assembly, homodimer; antiparallel.

In terms of biological role, F-actin cross-linking protein which is thought to anchor actin to a variety of intracellular structures. This is a bundling protein. This Dermatophagoides farinae (American house dust mite) protein is Alpha-actinin.